The primary structure comprises 99 residues: Small ribosomal subunit protein uS14c (99 aa).

The tract at residues 46 to 66 is disordered; sequence LQSSPRNSAPTRLHRRCSSTG.

This sequence belongs to the universal ribosomal protein uS14 family. In terms of assembly, part of the 30S ribosomal subunit.

The protein localises to the plastid. It localises to the chloroplast. Binds 16S rRNA, required for the assembly of 30S particles. This chain is Small ribosomal subunit protein uS14c, found in Pinus thunbergii (Japanese black pine).